Here is a 365-residue protein sequence, read N- to C-terminus: tRNA-specific 2-thiouridylase MnmA (365 aa).

Residues 14-21 (AMSGGVDS) and Leu40 each bind ATP. Cys108 acts as the Nucleophile in catalysis. Cysteines 108 and 204 form a disulfide. Gly132 is a binding site for ATP. An interaction with tRNA region spans residues 154–156 (KDQ). The active-site Cysteine persulfide intermediate is Cys204.

This sequence belongs to the MnmA/TRMU family.

It localises to the cytoplasm. The catalysed reaction is S-sulfanyl-L-cysteinyl-[protein] + uridine(34) in tRNA + AH2 + ATP = 2-thiouridine(34) in tRNA + L-cysteinyl-[protein] + A + AMP + diphosphate + H(+). Catalyzes the 2-thiolation of uridine at the wobble position (U34) of tRNA, leading to the formation of s(2)U34. This Rickettsia peacockii (strain Rustic) protein is tRNA-specific 2-thiouridylase MnmA.